Here is a 168-residue protein sequence, read N- to C-terminus: MSGAGKKIADVAFKASRTIDWDGMAKVLVTDEARREFSNLRRAFDEVNTQLQTKFSQEPEPIDWDYYRKGIGAGIVDKYKEAYDSIEIPKYVDKVTPEYKPKFDALLVELKEAEQKSLKESERLEKEIADVQEISKKLSTMTADEYFEKHPELKKKFDDEIRNDNWGY.

Belongs to the ATPase d subunit family. As to quaternary structure, F-type ATPases have 2 components, CF(1) - the catalytic core - and CF(0) - the membrane proton channel. CF(0) seems to have nine subunits: a, b, c, d, e, f, g, F6 and 8 (or A6L).

It is found in the mitochondrion. It localises to the mitochondrion inner membrane. Mitochondrial membrane ATP synthase (F(1)F(0) ATP synthase or Complex V) produces ATP from ADP in the presence of a proton gradient across the membrane which is generated by electron transport complexes of the respiratory chain. F-type ATPases consist of two structural domains, F(1) - containing the extramembraneous catalytic core, and F(0) - containing the membrane proton channel, linked together by a central stalk and a peripheral stalk. During catalysis, ATP synthesis in the catalytic domain of F(1) is coupled via a rotary mechanism of the central stalk subunits to proton translocation. Part of the complex F(0) domain and the peripheric stalk, which acts as a stator to hold the catalytic alpha(3)beta(3) subcomplex and subunit a/ATP6 static relative to the rotary elements. The chain is ATP synthase subunit d, mitochondrial from Arabidopsis thaliana (Mouse-ear cress).